Consider the following 49-residue polypeptide: Large ribosomal subunit protein bL36 (49 aa).

Belongs to the bacterial ribosomal protein bL36 family.

The sequence is that of Large ribosomal subunit protein bL36 from Delftia acidovorans (strain DSM 14801 / SPH-1).